Here is a 1372-residue protein sequence, read N- to C-terminus: DNA-directed RNA polymerase subunit beta' (1372 aa).

Zn(2+) is bound by residues cysteine 69, cysteine 71, cysteine 84, and cysteine 87. Mg(2+) contacts are provided by aspartate 460, aspartate 462, and aspartate 464. Zn(2+) contacts are provided by cysteine 808, cysteine 882, cysteine 889, and cysteine 892.

Belongs to the RNA polymerase beta' chain family. The RNAP catalytic core consists of 2 alpha, 1 beta, 1 beta' and 1 omega subunit. When a sigma factor is associated with the core the holoenzyme is formed, which can initiate transcription. It depends on Mg(2+) as a cofactor. Zn(2+) is required as a cofactor.

It catalyses the reaction RNA(n) + a ribonucleoside 5'-triphosphate = RNA(n+1) + diphosphate. Its function is as follows. DNA-dependent RNA polymerase catalyzes the transcription of DNA into RNA using the four ribonucleoside triphosphates as substrates. The chain is DNA-directed RNA polymerase subunit beta' from Rickettsia conorii (strain ATCC VR-613 / Malish 7).